Reading from the N-terminus, the 257-residue chain is Acetylglutamate kinase (257 aa).

Substrate is bound by residues 43–44 (GG), arginine 65, and asparagine 157. ATP is bound by residues 180–185 (DVSGIL) and 208–210 (IIT).

It belongs to the acetylglutamate kinase family. ArgB subfamily. Homodimer.

The protein resides in the cytoplasm. It carries out the reaction N-acetyl-L-glutamate + ATP = N-acetyl-L-glutamyl 5-phosphate + ADP. It participates in amino-acid biosynthesis; L-arginine biosynthesis; N(2)-acetyl-L-ornithine from L-glutamate: step 2/4. In terms of biological role, catalyzes the ATP-dependent phosphorylation of N-acetyl-L-glutamate. The sequence is that of Acetylglutamate kinase from Salmonella paratyphi B (strain ATCC BAA-1250 / SPB7).